We begin with the raw amino-acid sequence, 364 residues long: Glycerophosphodiester phosphodiesterase (364 aa).

Residues 1 to 18 (MKLKTLALSLLAAGVLAG) form the signal peptide. A lipid anchor (N-palmitoyl cysteine) is attached at Cys19. Cys19 carries the S-diacylglycerol cysteine lipid modification. In terms of domain architecture, GP-PDE spans 35-360 (KIIIAHRGAS…DFPDTGVEFL (326 aa)). The active-site Proton acceptor is His40. Residues Glu67 and Asp69 each coordinate Ca(2+). The active-site Proton donor is the His82. A Ca(2+)-binding site is contributed by Glu175.

It belongs to the glycerophosphoryl diester phosphodiesterase family. The cofactor is Ca(2+). Contains both ester- and amide-linked fatty acids.

It localises to the cell outer membrane. The catalysed reaction is a sn-glycero-3-phosphodiester + H2O = an alcohol + sn-glycerol 3-phosphate + H(+). Its function is as follows. Glycerophosphodiester phosphodiesterase hydrolyzes glycerophosphodiesters into glycerol-3-phosphate (G3P) and the corresponding alcohol. Has a specific affinity for human immunoglobulin D myeloma protein. The protein is Glycerophosphodiester phosphodiesterase (glpQ) of Haemophilus influenzae (strain ATCC 51907 / DSM 11121 / KW20 / Rd).